The sequence spans 119 residues: MATTIPSPFNWDSSFCVGNNELNEQHKKLFALINALDANRSSASALKELLDFVVMHFKAEEDLFAKVNFSDSTSHKETHDKFVQDALGLKTVGDAEIQFIKQWLVNHIKGSDMKYKGVL.

Residues histidine 26, histidine 56, glutamate 60, histidine 75, histidine 79, histidine 107, and aspartate 112 each coordinate Fe cation.

It belongs to the hemerythrin family.

In terms of biological role, oxygen-binding protein. The oxygen-binding site contains two iron atoms. The sequence is that of Hemerythrin-like protein (nfa1) from Naegleria fowleri (Brain eating amoeba).